We begin with the raw amino-acid sequence, 295 residues long: Bifunctional protein FolD (295 aa).

NADP(+)-binding positions include 166-168, Ser195, and Ile236; that span reads GRS.

The protein belongs to the tetrahydrofolate dehydrogenase/cyclohydrolase family. In terms of assembly, homodimer.

The enzyme catalyses (6R)-5,10-methylene-5,6,7,8-tetrahydrofolate + NADP(+) = (6R)-5,10-methenyltetrahydrofolate + NADPH. The catalysed reaction is (6R)-5,10-methenyltetrahydrofolate + H2O = (6R)-10-formyltetrahydrofolate + H(+). The protein operates within one-carbon metabolism; tetrahydrofolate interconversion. In terms of biological role, catalyzes the oxidation of 5,10-methylenetetrahydrofolate to 5,10-methenyltetrahydrofolate and then the hydrolysis of 5,10-methenyltetrahydrofolate to 10-formyltetrahydrofolate. The protein is Bifunctional protein FolD of Chlorobium chlorochromatii (strain CaD3).